A 285-amino-acid polypeptide reads, in one-letter code: Diphthine methyl ester synthase (285 aa).

Residues L9, D84, G87, 112-113 (SI), and L163 each bind S-adenosyl-L-methionine. S171 bears the Phosphoserine mark. S-adenosyl-L-methionine-binding residues include V225 and H250.

It belongs to the diphthine synthase family.

The enzyme catalyses 2-[(3S)-amino-3-carboxypropyl]-L-histidyl-[translation elongation factor 2] + 4 S-adenosyl-L-methionine = diphthine methyl ester-[translation elongation factor 2] + 4 S-adenosyl-L-homocysteine + 3 H(+). Its pathway is protein modification; peptidyl-diphthamide biosynthesis. Its function is as follows. S-adenosyl-L-methionine-dependent methyltransferase that catalyzes four methylations of the modified target histidine residue in translation elongation factor 2 (EF-2), to form an intermediate called diphthine methyl ester. The four successive methylation reactions represent the second step of diphthamide biosynthesis. This is Diphthine methyl ester synthase (DPH5) from Bos taurus (Bovine).